The primary structure comprises 311 residues: Tryptophan 2,3-dioxygenase (311 aa).

The segment at methionine 1 to aspartate 37 is disordered. Low complexity predominate over residues alanine 17–histidine 27. Substrate contacts are provided by residues phenylalanine 80–histidine 84, tyrosine 142, and arginine 146. Heme is bound at residue histidine 269. Threonine 283 contributes to the substrate binding site.

It belongs to the tryptophan 2,3-dioxygenase family. In terms of assembly, homotetramer. Requires heme as cofactor.

The catalysed reaction is L-tryptophan + O2 = N-formyl-L-kynurenine. The protein operates within amino-acid degradation; L-tryptophan degradation via kynurenine pathway; L-kynurenine from L-tryptophan: step 1/2. Functionally, heme-dependent dioxygenase that catalyzes the oxidative cleavage of the L-tryptophan (L-Trp) pyrrole ring and converts L-tryptophan to N-formyl-L-kynurenine. Catalyzes the oxidative cleavage of the indole moiety. The sequence is that of Tryptophan 2,3-dioxygenase from Burkholderia cenocepacia (strain ATCC BAA-245 / DSM 16553 / LMG 16656 / NCTC 13227 / J2315 / CF5610) (Burkholderia cepacia (strain J2315)).